The sequence spans 140 residues: Ubiquitin-like protein ATG12 (140 aa).

The disordered stretch occupies residues 1–52; it reads MAEEPQTVLQLPPSSAAGGEGLTDVSPETTTPEPPSSAAVSPGTEEPAGDTK. Positions 25–42 are enriched in low complexity; that stretch reads VSPETTTPEPPSSAAVSP. Gly140 is covalently cross-linked (Glycyl lysine isopeptide (Gly-Lys) (interchain with K-? in acceptor protein)).

It belongs to the ATG12 family. In terms of assembly, forms a conjugate with ATG5. Part of the minor complex composed of 4 sets of ATG12-ATG5 and ATG16L1 (400 kDa); this complex interacts with ATG3 leading to disruption of ATG7 interaction and promotion of ATG8-like proteins lipidation. Forms an 800-kDa complex composed of ATG12-ATG5 and ATG16L2. Interacts with DHX58/RIG-1, IFIH1/MDA5 and MAVS/IPS-1 in monomeric form as well as in ATG12-ATG5 conjugate. The interaction with MAVS is further enhanced upon vesicular stomatitis virus (VSV) infection. Interacts with ATG3; this interaction is essential for phosphatidylethanolamine (PE)-conjugated ATG8-like proteins formation. Interacts with ATG7. Interacts with ATG10. Interacts with TECPR1. Interacts with SH3BGRL. The ATG12-ATG5 conjugate interacts with PDCD6IP (via the BRO1 domain); this interaction is bridged by ATG12 and promotes multiple PDCD6IP-mediated functions such as endolysosomal trafficking, macroautophagy and exosome biogenesis. In terms of processing, acetylated by EP300.

It localises to the cytoplasm. The protein localises to the preautophagosomal structure membrane. In terms of biological role, ubiquitin-like protein involved in autophagy vesicles formation. Conjugation with ATG5 through a ubiquitin-like conjugating system involving also ATG7 as an E1-like activating enzyme and ATG10 as an E2-like conjugating enzyme, is essential for its function. The ATG12-ATG5 conjugate acts as an E3-like enzyme which is required for lipidation of ATG8 family proteins and their association to the vesicle membranes. The ATG12-ATG5 conjugate also negatively regulates the innate antiviral immune response by blocking the type I IFN production pathway through direct association with RARRES3 and MAVS. Also plays a role in translation or delivery of incoming viral RNA to the translation apparatus. As part of the ATG8 conjugation system with ATG5 and ATG16L1, required for recruitment of LRRK2 to stressed lysosomes and induction of LRRK2 kinase activity in response to lysosomal stress. This is Ubiquitin-like protein ATG12 from Pongo abelii (Sumatran orangutan).